The chain runs to 179 residues: Sec-independent protein translocase protein TatB (179 aa).

The chain crosses the membrane as a helical span at residues 2 to 22 (FNGVGWGEVVVLLLIGLFVFG). Positions 98-109 (LLGDDPPAAPSL) are enriched in low complexity. The disordered stretch occupies residues 98-179 (LLGDDPPAAP…TEVPFDSDAT (82 aa)).

It belongs to the TatB family. As to quaternary structure, the Tat system comprises two distinct complexes: a TatABC complex, containing multiple copies of TatA, TatB and TatC subunits, and a separate TatA complex, containing only TatA subunits. Substrates initially bind to the TatABC complex, which probably triggers association of the separate TatA complex to form the active translocon.

It is found in the cell membrane. Functionally, part of the twin-arginine translocation (Tat) system that transports large folded proteins containing a characteristic twin-arginine motif in their signal peptide across membranes. Together with TatC, TatB is part of a receptor directly interacting with Tat signal peptides. TatB may form an oligomeric binding site that transiently accommodates folded Tat precursor proteins before their translocation. This is Sec-independent protein translocase protein TatB from Frankia casuarinae (strain DSM 45818 / CECT 9043 / HFP020203 / CcI3).